A 303-amino-acid polypeptide reads, in one-letter code: Mitochondrial substrate carrier family protein E (303 aa).

Residues 1 to 8 are Mitochondrial intermembrane-facing; the sequence is MENKKESS. Solcar repeat units lie at residues 6–93, 104–197, and 210–298; these read ESSL…SKQW, ESTI…CKST, and LPIP…LKYL. The chain crosses the membrane as a helical span at residues 9–29; that stretch reads LLYILTGATSGLLADSIMHPV. Residues 30-67 are Mitochondrial matrix-facing; that stretch reads DTVRARVQIEKVGKSQYKGTFNALNQIIKNEGVSYLYK. A helical membrane pass occupies residues 68–88; the sequence is GFPIVATATVPAHALYFLGYE. Topologically, residues 89–109 are mitochondrial intermembrane; it reads YSKQWVTDRYGKKWGESTITH. Residues 110–130 traverse the membrane as a helical segment; that stretch reads FSAGFVADALGSLIWVPMDII. Over 131–171 the chain is Mitochondrial matrix; sequence KQRLQVQTNTQKLNPNQTYYKGSFHAGKIILQEEGIRGLYR. The chain crosses the membrane as a helical span at residues 172–192; sequence GFMPALATYGPFVGIYFSVYE. Topologically, residues 193–215 are mitochondrial intermembrane; it reads KCKSTISSLLSKEKDQYLPIPYQ. A helical transmembrane segment spans residues 216-236; it reads LGSGFFAGAFAAAVTCPLDVI. The Mitochondrial matrix portion of the chain corresponds to 237 to 268; it reads KTRIQVQRSTEKQIYKGMWDSFKTILKEEGPK. The chain crosses the membrane as a helical span at residues 269 to 289; sequence AFVKGMGARIWWIAPGNALTI. At 290 to 303 the chain is on the mitochondrial intermembrane side; the sequence is ASYEQLKYLFKDLI.

The protein belongs to the mitochondrial carrier (TC 2.A.29) family.

It localises to the mitochondrion inner membrane. In terms of biological role, mitochondrial solute carriers shuttle metabolites, nucleotides, and cofactors through the mitochondrial inner membrane. This is Mitochondrial substrate carrier family protein E (mcfE) from Dictyostelium discoideum (Social amoeba).